The chain runs to 247 residues: 6-phosphogluconolactonase (247 aa).

The protein belongs to the glucosamine/galactosamine-6-phosphate isomerase family. 6-phosphogluconolactonase subfamily.

It catalyses the reaction 6-phospho-D-glucono-1,5-lactone + H2O = 6-phospho-D-gluconate + H(+). The protein operates within carbohydrate degradation; pentose phosphate pathway; D-ribulose 5-phosphate from D-glucose 6-phosphate (oxidative stage): step 2/3. In terms of biological role, hydrolysis of 6-phosphogluconolactone to 6-phosphogluconate. This is 6-phosphogluconolactonase (pgl) from Mycobacterium bovis (strain ATCC BAA-935 / AF2122/97).